A 332-amino-acid polypeptide reads, in one-letter code: Phosphate acyltransferase (332 aa).

This sequence belongs to the PlsX family. Homodimer. Probably interacts with PlsY.

It localises to the cytoplasm. The enzyme catalyses a fatty acyl-[ACP] + phosphate = an acyl phosphate + holo-[ACP]. Its pathway is lipid metabolism; phospholipid metabolism. Its function is as follows. Catalyzes the reversible formation of acyl-phosphate (acyl-PO(4)) from acyl-[acyl-carrier-protein] (acyl-ACP). This enzyme utilizes acyl-ACP as fatty acyl donor, but not acyl-CoA. This chain is Phosphate acyltransferase, found in Streptococcus mutans serotype c (strain ATCC 700610 / UA159).